Consider the following 375-residue polypeptide: Probable sugar phosphate/phosphate translocator At3g17430 (375 aa).

The next 10 helical transmembrane spans lie at 9–29, 43–63, 76–96, 106–126, 140–160, 163–183, 193–213, 229–249, 257–276, and 280–302; these read LVLT…VILY, LPIT…FLLI, FEIY…SLWF, VAFI…MAVV, MLLV…FNIV, VYQV…QVLL, ITSL…PWYV, WIFF…FLVI, IRVA…TVIF, and TITG…YNYI. Positions 328-348 are disordered; that stretch reads EKKSSDKFNPNDSVEIPRVGG.

This sequence belongs to the TPT transporter family. TPT (TC 2.A.7.9) subfamily.

The protein localises to the membrane. In Arabidopsis thaliana (Mouse-ear cress), this protein is Probable sugar phosphate/phosphate translocator At3g17430.